Reading from the N-terminus, the 97-residue chain is U-scoloptoxin(10)-Sa2a (97 aa).

The N-terminal stretch at 1–23 is a signal peptide; it reads MNKSMLIFFTILFLTYIIEEKEA.

Belongs to the scoloptoxin-10 family. Post-translationally, contains 3 disulfide bonds. As to expression, expressed by the venom gland.

The protein localises to the secreted. This Scolopendra alternans (Florida Keys giant centipede) protein is U-scoloptoxin(10)-Sa2a.